A 294-amino-acid polypeptide reads, in one-letter code: Acetyl-coenzyme A carboxylase carboxyl transferase subunit beta (294 aa).

The 265-residue stretch at 30–294 (IMTKCPECKK…PGVGGEVDGE (265 aa)) folds into the CoA carboxyltransferase N-terminal domain. Residues cysteine 34, cysteine 37, cysteine 53, and cysteine 56 each contribute to the Zn(2+) site. Residues 34–56 (CPECKKIMYTKELQKNLMVCNYC) form a C4-type zinc finger.

Belongs to the AccD/PCCB family. Acetyl-CoA carboxylase is a heterohexamer composed of biotin carboxyl carrier protein (AccB), biotin carboxylase (AccC) and two subunits each of ACCase subunit alpha (AccA) and ACCase subunit beta (AccD). The cofactor is Zn(2+).

The protein localises to the cytoplasm. It carries out the reaction N(6)-carboxybiotinyl-L-lysyl-[protein] + acetyl-CoA = N(6)-biotinyl-L-lysyl-[protein] + malonyl-CoA. It participates in lipid metabolism; malonyl-CoA biosynthesis; malonyl-CoA from acetyl-CoA: step 1/1. Component of the acetyl coenzyme A carboxylase (ACC) complex. Biotin carboxylase (BC) catalyzes the carboxylation of biotin on its carrier protein (BCCP) and then the CO(2) group is transferred by the transcarboxylase to acetyl-CoA to form malonyl-CoA. The polypeptide is Acetyl-coenzyme A carboxylase carboxyl transferase subunit beta (Listeria monocytogenes serovar 1/2a (strain ATCC BAA-679 / EGD-e)).